The chain runs to 375 residues: tRNA-specific 2-thiouridylase MnmA (375 aa).

ATP contacts are provided by residues 17–24 (GMSGGVDS) and methionine 43. The segment at 103-105 (NPD) is interaction with target base in tRNA. Cysteine 108 serves as the catalytic Nucleophile. Cysteines 108 and 204 form a disulfide. Glycine 132 contacts ATP. An interaction with tRNA region spans residues 154-156 (KDQ). Catalysis depends on cysteine 204, which acts as the Cysteine persulfide intermediate. Residues 316-317 (RY) form an interaction with tRNA region.

It belongs to the MnmA/TRMU family.

The protein resides in the cytoplasm. The enzyme catalyses S-sulfanyl-L-cysteinyl-[protein] + uridine(34) in tRNA + AH2 + ATP = 2-thiouridine(34) in tRNA + L-cysteinyl-[protein] + A + AMP + diphosphate + H(+). In terms of biological role, catalyzes the 2-thiolation of uridine at the wobble position (U34) of tRNA, leading to the formation of s(2)U34. This is tRNA-specific 2-thiouridylase MnmA from Stutzerimonas stutzeri (strain A1501) (Pseudomonas stutzeri).